The following is a 610-amino-acid chain: Myoneurin (610 aa).

The region spanning 24–89 (CDCTVVIGEF…IYTGTLNLDS (66 aa)) is the BTB domain. Residues 156–199 (SEVSTDSVQANPKPRALTKKSSQSKKKKKAFSSQKPGQSKAVQY) form a disordered region. Positions 171–185 (ALTKKSSQSKKKKKA) are enriched in basic residues. Short sequence motifs (nuclear localization signal) lie at residues 174 to 190 (KKSSQSKKKKKAFSSQK) and 257 to 262 (KRKRRK). 8 C2H2-type zinc fingers span residues 302–324 (PMCNTCGKVFSEASSLRRHMRIH), 330–352 (YVCHLCGKAFTQCNQLKTHVRTH), 358–381 (YKCELCDKGFAQKCQLVFHSRMHH), 387–409 (YKCDVCNLQFATSSNLKIHARKH), 415–437 (YVCDRCGQRFAQASTLTYHVRRH), 443–465 (YVCDTCGKAFAVSSSLITHSRKH), 471–493 (YICGICGKSFISSGELNKHFRSH), and 499–522 (FICELCGNSYTDIKNLKKHKTKVH). Positions 519-548 (TKVHSGTDKNPDCSVDDHAVSEQDSVQRSP) are disordered. Over residues 523-539 (SGTDKNPDCSVDDHAVS) the composition is skewed to basic and acidic residues.

Belongs to the krueppel C2H2-type zinc-finger protein family. In terms of tissue distribution, mainly expressed in the neuromuscular system. Located in and around synaptic myonuclei in adult muscle. Expression is dysregulated after nerve injury. Also found in the cerebellum, testis, heart, brain and liver.

The protein localises to the nucleus. This Mus musculus (Mouse) protein is Myoneurin (Mynn).